Here is a 530-residue protein sequence, read N- to C-terminus: Formate--tetrahydrofolate ligase (530 aa).

Threonine 46–threonine 53 is an ATP binding site.

The protein belongs to the formate--tetrahydrofolate ligase family.

It carries out the reaction (6S)-5,6,7,8-tetrahydrofolate + formate + ATP = (6R)-10-formyltetrahydrofolate + ADP + phosphate. It participates in one-carbon metabolism; tetrahydrofolate interconversion. The protein is Formate--tetrahydrofolate ligase of Malacoplasma penetrans (strain HF-2) (Mycoplasma penetrans).